Consider the following 178-residue polypeptide: UPF0302 protein BcerKBAB4_1445 (178 aa).

It belongs to the UPF0302 family.

This is UPF0302 protein BcerKBAB4_1445 from Bacillus mycoides (strain KBAB4) (Bacillus weihenstephanensis).